A 419-amino-acid chain; its full sequence is MDKILVRGGNTLKGTIPISGAKNACLPELAATLLTEDTVTLRNVPHLRDVTTMLELLGQHGAAITIDEKLGVSIDCKSIQNTMAPYDLVRTMRASVLVMGPLVARCGHAEISLPGGCAIGSRPINLHLRGLEMMGAHVTLEDGYVRIKAGRLKGAHIVFDLVTVTGTENLLMAATLADGITILDNAAAEPEVVDLANLLMAMGAKIDGAGTRTITIEGVKNLHGTSHDILPDRIETGTFMVAAAVTGGDITMTGTYPALLEAHIAKMREAGCQIDEMDRAIRVRAEAGTLRAVDITTLPHPGFPTDLQAQMMVLLTVAKGAAQIKETIFENRFMHVSELQRMGADITVQGNTAIVRGVPQLRGAPVMATDLRASASLVLAGLCAEGETLISRVYHIDRGYERIEEKLKALGADIQRLGR.

Phosphoenolpyruvate is bound at residue 22–23 (KN). A UDP-N-acetyl-alpha-D-glucosamine-binding site is contributed by R93. C117 acts as the Proton donor in catalysis. Position 117 is a 2-(S-cysteinyl)pyruvic acid O-phosphothioketal (C117). UDP-N-acetyl-alpha-D-glucosamine-binding residues include D306 and I328.

Belongs to the EPSP synthase family. MurA subfamily.

The protein resides in the cytoplasm. It carries out the reaction phosphoenolpyruvate + UDP-N-acetyl-alpha-D-glucosamine = UDP-N-acetyl-3-O-(1-carboxyvinyl)-alpha-D-glucosamine + phosphate. Its pathway is cell wall biogenesis; peptidoglycan biosynthesis. Its function is as follows. Cell wall formation. Adds enolpyruvyl to UDP-N-acetylglucosamine. This is UDP-N-acetylglucosamine 1-carboxyvinyltransferase from Magnetococcus marinus (strain ATCC BAA-1437 / JCM 17883 / MC-1).